We begin with the raw amino-acid sequence, 125 residues long: MRHYEIVFMVHPDQSEQVPGMIERYTGSVKEAGGQVHRLEDWGRRQLAYPINKLHKAHYVLMNVEVPQQVIDELETTFRYNDAVLRSLVIHTKHAVTEASPMKAAKEERKPLAEVENNDFEDAEE.

The disordered stretch occupies residues 97 to 125 (TEASPMKAAKEERKPLAEVENNDFEDAEE). Over residues 104-113 (AAKEERKPLA) the composition is skewed to basic and acidic residues. A compositionally biased stretch (acidic residues) spans 116–125 (ENNDFEDAEE).

The protein belongs to the bacterial ribosomal protein bS6 family.

Functionally, binds together with bS18 to 16S ribosomal RNA. The polypeptide is Small ribosomal subunit protein bS6 (Haemophilus influenzae (strain PittEE)).